The sequence spans 263 residues: Polyamine aminopropyltransferase (263 aa).

The 221-residue stretch at 1–221 folds into the PABS domain; it reads MARHPYRRLR…AVMAFQSSPK (221 aa). S-methyl-5'-thioadenosine-binding positions include Asp98 and 126–127; that span reads DG. Asp144 functions as the Proton acceptor in the catalytic mechanism.

This sequence belongs to the spermidine/spermine synthase family. Homodimer or homotetramer.

It is found in the cytoplasm. The catalysed reaction is S-adenosyl 3-(methylsulfanyl)propylamine + putrescine = S-methyl-5'-thioadenosine + spermidine + H(+). It functions in the pathway amine and polyamine biosynthesis; spermidine biosynthesis; spermidine from putrescine: step 1/1. Functionally, catalyzes the irreversible transfer of a propylamine group from the amino donor S-adenosylmethioninamine (decarboxy-AdoMet) to putrescine (1,4-diaminobutane) to yield spermidine. This is Polyamine aminopropyltransferase from Neisseria meningitidis serogroup A / serotype 4A (strain DSM 15465 / Z2491).